Here is a 39-residue protein sequence, read N- to C-terminus: Cytochrome b6-f complex subunit 5 (39 aa).

The chain crosses the membrane as a helical span at residues 5 to 25; it reads LLCGIVLGLVPITIVGLFVSA.

The protein belongs to the PetG family. In terms of assembly, the 4 large subunits of the cytochrome b6-f complex are cytochrome b6, subunit IV (17 kDa polypeptide, PetD), cytochrome f and the Rieske protein, while the 4 small subunits are PetG, PetL, PetM and PetN. The complex functions as a dimer.

The protein localises to the cellular thylakoid membrane. Its function is as follows. Component of the cytochrome b6-f complex, which mediates electron transfer between photosystem II (PSII) and photosystem I (PSI), cyclic electron flow around PSI, and state transitions. PetG is required for either the stability or assembly of the cytochrome b6-f complex. In Prochlorococcus marinus (strain MIT 9211), this protein is Cytochrome b6-f complex subunit 5.